The primary structure comprises 872 residues: Extended synaptotagmin-2-A (872 aa).

A disordered region spans residues 1-25 (MSSESSAEKGPPPSPAENVQPGVPP). At 1–31 (MSSESSAEKGPPPSPAENVQPGVPPAAEEPG) the chain is on the cytoplasmic side. Residues 32 to 52 (MISVDIAGLFYQFSKTFILIF) traverse the membrane as a helical segment. The Lumenal portion of the chain corresponds to 53-55 (PVY). A helical transmembrane segment spans residues 56 to 76 (VLGYFGLSFSWLLIALVLLLW). Over 77-872 (WRRNKGNKNS…EDGTRPAVSS (796 aa)) the chain is Cytoplasmic. Residues 119-298 (DIERAEWLNK…LPNRITVPLV (180 aa)) form the SMP-LTD domain. C2 domains are found at residues 297–417 (LVSD…DEWF) and 442–588 (NLDQ…HLNN). Ca(2+)-binding residues include Lys-328, Asp-329, Asp-341, Asp-388, Glu-389, Asp-390, Asp-392, Asp-394, and Asp-395. Basic and acidic residues predominate over residues 608 to 617 (KPVRSPDEQH). The disordered stretch occupies residues 608–711 (KPVRSPDEQH…EPTPSIASDI (104 aa)). A compositionally biased stretch (pro residues) spans 632-652 (PPTPQMPSPSPAVAHKPPPTP). The span at 664–681 (NKGTPPSASPKSPTELHQ) shows a compositional bias: polar residues. The span at 682 to 696 (SSSSLSGSSFTYSPS) shows a compositional bias: low complexity. The C2 3 domain maps to 737-859 (PLGQIQLTIR…DAAKGWTQWY (123 aa)). Residues 784 to 791 (KRRSGRRK) are required for phosphatidylinositol 4,5-bisphosphate-dependent location at the cell membrane.

Belongs to the extended synaptotagmin family. As to quaternary structure, interacts with fgfr1 that has been activated by fgf1 binding. Interacts (via C2 domains) with the AP-2 complex (via an alpha subunit). Identified in a complex with the AP-2 complex and fgfr1.

Its subcellular location is the cell membrane. It is found in the endoplasmic reticulum membrane. Functionally, tethers the endoplasmic reticulum to the cell membrane and promotes the formation of appositions between the endoplasmic reticulum and the cell membrane. Binds glycerophospholipids in a barrel-like domain and may play a role in cellular lipid transport. Plays a role in the rapid internalization of fgfr1 that has been activated by fgf1 binding; this occurs most likely via the AP-2 complex. Required for normal fgf signaling and the activation of downstream signaling cascades via its role in the internalization of activated fgfr1. Required for normal embryonic development via its role in fgf signaling and the downstream regulation of t/xBRA expression. This Xenopus laevis (African clawed frog) protein is Extended synaptotagmin-2-A (esyt2-a).